A 589-amino-acid polypeptide reads, in one-letter code: Malto-oligosyltrehalose trehalohydrolase (589 aa).

256–261 is a substrate binding site; sequence GFDAVH. The active-site Nucleophile is the Asp-258. Glu-295 serves as the catalytic Proton donor. Residues 320–324 and 390–395 contribute to the substrate site; these read DDFHT and HDQIGN.

The protein belongs to the glycosyl hydrolase 13 family.

The protein localises to the cytoplasm. It carries out the reaction hydrolysis of (1-&gt;4)-alpha-D-glucosidic linkage in 4-alpha-D-[(1-&gt;4)-alpha-D-glucanosyl]n trehalose to yield trehalose and (1-&gt;4)-alpha-D-glucan.. It functions in the pathway glycan biosynthesis; trehalose biosynthesis. In Brevibacterium helvolum, this protein is Malto-oligosyltrehalose trehalohydrolase (treZ).